We begin with the raw amino-acid sequence, 236 residues long: Endo-1,4-beta-xylanase 3 (236 aa).

An N-terminal signal peptide occupies residues 1–45 (MQILTWALAALAAIPAVTAAPVETVEASSMDELVERSPNVTLVAR). N-linked (GlcNAc...) asparagine glycans are attached at residues asparagine 39 and asparagine 106. One can recognise a GH11 domain in the interval 46–236 (GTPSSTGTHN…SSGSASMTVR (191 aa)). Glutamate 131 functions as the Nucleophile in the catalytic mechanism. Glutamate 223 functions as the Proton donor in the catalytic mechanism.

Belongs to the glycosyl hydrolase 11 (cellulase G) family.

Its subcellular location is the secreted. The enzyme catalyses Endohydrolysis of (1-&gt;4)-beta-D-xylosidic linkages in xylans.. Its pathway is glycan degradation; xylan degradation. Endo-1,4-beta-xylanase involved in the hydrolysis of xylan, a major structural heterogeneous polysaccharide found in plant biomass representing the second most abundant polysaccharide in the biosphere, after cellulose. In Pyricularia grisea (Crabgrass-specific blast fungus), this protein is Endo-1,4-beta-xylanase 3 (XYL3).